Consider the following 527-residue polypeptide: Cytokinin dehydrogenase 6 (527 aa).

The N-terminal stretch at 1-22 is a signal peptide; the sequence is MAARCSIAFMVMASCLSVVVSG. One can recognise an FAD-binding PCMH-type domain in the interval 55-236; sequence VAAAPEAVLH…TRARIGLEPA (182 aa). G91 and G93 together coordinate FAD. The residue at position 94 (H94) is a Pros-8alpha-FAD histidine. FAD-binding residues include S95 and Q99. N121 carries an N-linked (GlcNAc...) asparagine glycan. Residues D160, T165, S171, I175, and I226 each contribute to the FAD site. 2 N-linked (GlcNAc...) asparagine glycosylation sites follow: N280 and N323. FAD is bound by residues Y475, S510, and Q513.

This sequence belongs to the oxygen-dependent FAD-linked oxidoreductase family. In terms of assembly, monomer. The cofactor is FAD.

It is found in the secreted. It localises to the extracellular space. It carries out the reaction N(6)-dimethylallyladenine + A + H2O = 3-methyl-2-butenal + adenine + AH2. Functionally, catalyzes the oxidation of cytokinins, a family of N(6)-substituted adenine derivatives that are plant hormones, where the substituent is an isopentenyl group. The chain is Cytokinin dehydrogenase 6 (CKX6) from Oryza sativa subsp. japonica (Rice).